We begin with the raw amino-acid sequence, 238 residues long: Ribosomal RNA small subunit methyltransferase G (238 aa).

S-adenosyl-L-methionine is bound by residues Gly77, Phe82, 128 to 129 (AE), and Arg147. The interval 219–238 (KKTPARYPRKPGTPNKQPIQ) is disordered.

The protein belongs to the methyltransferase superfamily. RNA methyltransferase RsmG family.

The protein localises to the cytoplasm. Specifically methylates the N7 position of guanine in position 535 of 16S rRNA. This chain is Ribosomal RNA small subunit methyltransferase G, found in Geobacillus thermodenitrificans (strain NG80-2).